We begin with the raw amino-acid sequence, 356 residues long: Glucose 1-dehydrogenase 2 (356 aa).

Asp-38 provides a ligand contact to Zn(2+). Ser-40 contacts substrate. Residues His-64 and Glu-65 each coordinate Zn(2+). Substrate is bound by residues Glu-114 and Glu-150. A Zn(2+)-binding site is contributed by Glu-150. Residues 181–184, 206–207, and 301–303 contribute to the NADP(+) site; these read NGNL, RR, and VVN. Asn-303 contributes to the substrate binding site.

It belongs to the zinc-containing alcohol dehydrogenase family. Glucose 1-dehydrogenase subfamily. Zn(2+) is required as a cofactor.

It carries out the reaction D-glucose + NAD(+) = D-glucono-1,5-lactone + NADH + H(+). The enzyme catalyses D-glucose + NADP(+) = D-glucono-1,5-lactone + NADPH + H(+). Functionally, catalyzes the NAD(P)(+)-dependent oxidation of D-glucose to D-gluconate via gluconolactone. Can utilize both NAD(+) and NADP(+) as electron acceptor. Is involved in the degradation of glucose through a modified Entner-Doudoroff pathway. The sequence is that of Glucose 1-dehydrogenase 2 from Haloterrigena turkmenica (strain ATCC 51198 / DSM 5511 / JCM 9101 / NCIMB 13204 / VKM B-1734 / 4k) (Halococcus turkmenicus).